Here is an 85-residue protein sequence, read N- to C-terminus: Large ribosomal subunit protein bL27 (85 aa).

The disordered stretch occupies residues 1-22 (MAHKKGGGSSRNGRDSNAQRRG).

It belongs to the bacterial ribosomal protein bL27 family.

This Sorangium cellulosum (strain So ce56) (Polyangium cellulosum (strain So ce56)) protein is Large ribosomal subunit protein bL27.